The chain runs to 240 residues: Uridylate kinase (240 aa).

13 to 16 serves as a coordination point for ATP; it reads KASG. An involved in allosteric activation by GTP region spans residues 21-26; it reads GSQGFG. Gly55 provides a ligand contact to UMP. Residues Gly56 and Arg60 each coordinate ATP. UMP is bound by residues Asp75 and 136 to 143; that span reads TGNPFFTT. ATP-binding residues include Thr163, Gln164, Tyr169, and Asp172.

It belongs to the UMP kinase family. Homohexamer.

It is found in the cytoplasm. The enzyme catalyses UMP + ATP = UDP + ADP. It participates in pyrimidine metabolism; CTP biosynthesis via de novo pathway; UDP from UMP (UMPK route): step 1/1. Allosterically activated by GTP. Inhibited by UTP. Catalyzes the reversible phosphorylation of UMP to UDP. The sequence is that of Uridylate kinase from Brucella anthropi (strain ATCC 49188 / DSM 6882 / CCUG 24695 / JCM 21032 / LMG 3331 / NBRC 15819 / NCTC 12168 / Alc 37) (Ochrobactrum anthropi).